Reading from the N-terminus, the 503-residue chain is MKKARMTVDKDYKIAEIDKRIYGSFVEHLGRAVYDGLYQPGNSKSDEDGFRKDVIELVKELNVPIIRYPGGNFVSNYFWEDGVGPVEDRPRRLDLAWKSIEPNQVGINEFAKWCKKVNAEIMMAVNLGTRGISDACNLLEYCNHPGGSKYSDMRIKHGVKEPHNIKVWCLGNEMDGPWQVGHKTMDEYGRIAEETARAMKMIDPSIELVACGSSSKDMPTFPQWEATVLDYAYDYVDYISLHQYYGNKENDTADFLAKSDDLDDFIRSVIATCDYIKAKKRSKKDIYLSFDEWNVWYHSNNEDANIMQNEPWRIAPPLLEDIYTFEDALLVGLMLITLMKHADRIKIACLAQLINVIAPIVTERNGGAAWRQTIFYPFMHASKYGRGIVLQPVINSPLHDTSKHEDVTDIESVAIYNEEKEEVTIFAVNRNIHEDIVLVSDVRGMKDYRLLEHIVLEHQDLKIRNSVNGEEVYPKNSDKSSFDDGILTSMLRRASWNVIRIGK.

Glutamate 27, asparagine 72, and asparagine 172 together coordinate alpha-L-arabinofuranose. The active-site Proton donor/acceptor is glutamate 173. Alpha-L-arabinofuranose is bound by residues tyrosine 244, glutamate 292, and glutamine 352. Glutamate 292 acts as the Nucleophile in catalysis.

It belongs to the glycosyl hydrolase 51 family. Homohexamer; trimer of dimers.

It localises to the cytoplasm. The catalysed reaction is Hydrolysis of terminal non-reducing alpha-L-arabinofuranoside residues in alpha-L-arabinosides.. Its pathway is glycan metabolism; L-arabinan degradation. Involved in the degradation of arabinan and is a key enzyme in the complete degradation of the plant cell wall. Catalyzes the cleavage of terminal alpha-(1-&gt;5)-arabinofuranosyl bonds in small oligosaccharides as alpha-(1-&gt;5)-linked arabinobiose/arabinotriose, but does not display significant activity against linear non-substituted arabinan. It is also highly efficient in the cleavage of alpha-(1-&gt;3)-linked arabinoside of xylobiose and of the alpha-(1-&gt;3)-linked arabinoside decorations of polymeric wheat arabinoxylan. It exhibits very low activity against sugar beet arabinan. The polypeptide is Intracellular exo-alpha-(1-&gt;5)-L-arabinofuranosidase (Acetivibrio thermocellus (strain ATCC 27405 / DSM 1237 / JCM 9322 / NBRC 103400 / NCIMB 10682 / NRRL B-4536 / VPI 7372) (Clostridium thermocellum)).